A 138-amino-acid chain; its full sequence is Putative pre-16S rRNA nuclease (138 aa).

It belongs to the YqgF nuclease family.

Its subcellular location is the cytoplasm. Could be a nuclease involved in processing of the 5'-end of pre-16S rRNA. The polypeptide is Putative pre-16S rRNA nuclease (Geobacillus sp. (strain WCH70)).